Here is a 407-residue protein sequence, read N- to C-terminus: WEB family protein At3g51720 (407 aa).

Coiled coils occupy residues 72 to 99 (KVLK…DKEN), 128 to 217 (SVGL…ARAA), and 247 to 278 (EEIL…EAEE).

It belongs to the WEB family.

The chain is WEB family protein At3g51720 from Arabidopsis thaliana (Mouse-ear cress).